The primary structure comprises 215 residues: Octanoyltransferase (215 aa).

The BPL/LPL catalytic domain occupies 31-206; it reads TSAEDEIWLV…QLVKHLDYAE (176 aa). Residues 70–77, 137–139, and 150–152 contribute to the substrate site; these read RGGQVTYH, SLG, and GLA. Cys168 functions as the Acyl-thioester intermediate in the catalytic mechanism.

Belongs to the LipB family.

It is found in the cytoplasm. It catalyses the reaction octanoyl-[ACP] + L-lysyl-[protein] = N(6)-octanoyl-L-lysyl-[protein] + holo-[ACP] + H(+). It participates in protein modification; protein lipoylation via endogenous pathway; protein N(6)-(lipoyl)lysine from octanoyl-[acyl-carrier-protein]: step 1/2. Catalyzes the transfer of endogenously produced octanoic acid from octanoyl-acyl-carrier-protein onto the lipoyl domains of lipoate-dependent enzymes. Lipoyl-ACP can also act as a substrate although octanoyl-ACP is likely to be the physiological substrate. This chain is Octanoyltransferase, found in Pseudomonas fluorescens (strain SBW25).